A 121-amino-acid chain; its full sequence is Large ribosomal subunit protein bL19 (121 aa).

It belongs to the bacterial ribosomal protein bL19 family.

This protein is located at the 30S-50S ribosomal subunit interface and may play a role in the structure and function of the aminoacyl-tRNA binding site. This Chlorobium phaeobacteroides (strain BS1) protein is Large ribosomal subunit protein bL19.